The following is an 87-amino-acid chain: Kappa-2-bungarotoxin (87 aa).

The first 21 residues, 1–21, serve as a signal peptide directing secretion; the sequence is MKTLLLTLVVVTIVCLDLGYT. Intrachain disulfides connect Cys24–Cys42, Cys35–Cys63, Cys48–Cys52, Cys67–Cys79, and Cys80–Cys85.

This sequence belongs to the three-finger toxin family. Long-chain subfamily. Kappa-neurotoxin sub-subfamily. Homodimer and heterodimer with kappa 3-bungarotoxin; non-covalently linked. Expressed by the venom gland.

The protein resides in the secreted. Functionally, postsynaptic neurotoxin that binds and inhibits neuronal nicotinic acetylcholine receptors (nAChR) with high affinity (IC(50)&lt;100 nM). Is a selective, and slowly reversible antagonist of alpha-3/CHRNA3-containing and some alpha-4/CHRNA4-containing AChRs. The sequence is that of Kappa-2-bungarotoxin from Bungarus multicinctus (Many-banded krait).